The following is an 881-amino-acid chain: Valine--tRNA ligase (881 aa).

The 'HIGH' region signature appears at 48–58 (PNITGKLHLGH). Residues 527–531 (KMSKS) carry the 'KMSKS' region motif. Residue Lys-530 participates in ATP binding. Coiled coils occupy residues 721-747 (KNET…AEMN) and 811-881 (LLDL…AALK).

Belongs to the class-I aminoacyl-tRNA synthetase family. ValS type 1 subfamily. Monomer.

It localises to the cytoplasm. The enzyme catalyses tRNA(Val) + L-valine + ATP = L-valyl-tRNA(Val) + AMP + diphosphate. Catalyzes the attachment of valine to tRNA(Val). As ValRS can inadvertently accommodate and process structurally similar amino acids such as threonine, to avoid such errors, it has a 'posttransfer' editing activity that hydrolyzes mischarged Thr-tRNA(Val) in a tRNA-dependent manner. The sequence is that of Valine--tRNA ligase from Clostridium acetobutylicum (strain ATCC 824 / DSM 792 / JCM 1419 / IAM 19013 / LMG 5710 / NBRC 13948 / NRRL B-527 / VKM B-1787 / 2291 / W).